We begin with the raw amino-acid sequence, 403 residues long: Double C2-like domain-containing protein alpha (403 aa).

The tract at residues 1 to 92 (MRGRRGDRMT…DSYDSDDTTA (92 aa)) is interaction with UNC13D and DYNLT1. C2 domains lie at 92–214 (ALGT…HFNI) and 254–387 (ERGR…ERWH). Residues Asp-123, Asp-129, Asp-184, Asp-186, Asp-285, Asp-291, Asp-345, Asp-347, and Asp-353 each coordinate Ca(2+). The interaction with UNC13D stretch occupies residues 218 to 403 (RQVPLPSPSS…PPAAGALPLA (186 aa)).

As to quaternary structure, interacts (via N-terminus) with UNC13A. Interacts with cytoplasmic dynein light chain DYNLT1. Interacts with UNC13D. Ca(2+) is required as a cofactor. As to expression, predominantly expressed in brain. Also found in non-neural tissues. Expressed in RBL-2H3 mast cell line.

It localises to the cytoplasmic vesicle. The protein resides in the secretory vesicle. Its subcellular location is the synaptic vesicle membrane. The protein localises to the synapse. It is found in the synaptosome. It localises to the lysosome. In terms of biological role, calcium sensor which most probably regulates fusion of vesicles with membranes. Binds calcium and phospholipids. May be involved in calcium dependent neurotransmitter release through the interaction with UNC13A. May be involved in calcium-dependent spontaneous release of neurotransmitter in absence of action potentials in neuronal cells. Regulates Ca(2+)-dependent secretory lysosome exocytosis in mast cells. This Rattus norvegicus (Rat) protein is Double C2-like domain-containing protein alpha (Doc2a).